Here is a 251-residue protein sequence, read N- to C-terminus: 5'-nucleotidase SurE (251 aa).

The a divalent metal cation site is built by aspartate 8, aspartate 9, serine 39, and asparagine 90.

This sequence belongs to the SurE nucleotidase family. The cofactor is a divalent metal cation.

It is found in the cytoplasm. The catalysed reaction is a ribonucleoside 5'-phosphate + H2O = a ribonucleoside + phosphate. In terms of biological role, nucleotidase that shows phosphatase activity on nucleoside 5'-monophosphates. The protein is 5'-nucleotidase SurE of Legionella pneumophila subsp. pneumophila (strain Philadelphia 1 / ATCC 33152 / DSM 7513).